The chain runs to 79 residues: uncharacterized protein (79 aa).

The segment at 51–79 (PAQFPKVQRPPTLLGGKNTSTQTTLHPVI) is disordered. The segment covering 67-79 (KNTSTQTTLHPVI) has biased composition (polar residues).

This is an uncharacterized protein from Homo sapiens (Human).